Reading from the N-terminus, the 807-residue chain is 1,4-alpha-glucan branching enzyme GlgB (807 aa).

Asp405 serves as the catalytic Nucleophile. Glu458 acts as the Proton donor in catalysis.

It belongs to the glycosyl hydrolase 13 family. GlgB subfamily. As to quaternary structure, monomer.

It catalyses the reaction Transfers a segment of a (1-&gt;4)-alpha-D-glucan chain to a primary hydroxy group in a similar glucan chain.. The protein operates within glycan biosynthesis; glycogen biosynthesis. In terms of biological role, catalyzes the formation of the alpha-1,6-glucosidic linkages in glycogen by scission of a 1,4-alpha-linked oligosaccharide from growing alpha-1,4-glucan chains and the subsequent attachment of the oligosaccharide to the alpha-1,6 position. In Histophilus somni (strain 129Pt) (Haemophilus somnus), this protein is 1,4-alpha-glucan branching enzyme GlgB.